Reading from the N-terminus, the 374-residue chain is Mannitol-1-phosphate 5-dehydrogenase (374 aa).

3–14 provides a ligand contact to NAD(+); it reads AVHFGAGNIGRG.

The protein belongs to the mannitol dehydrogenase family.

It carries out the reaction D-mannitol 1-phosphate + NAD(+) = beta-D-fructose 6-phosphate + NADH + H(+). The chain is Mannitol-1-phosphate 5-dehydrogenase from Shouchella clausii (strain KSM-K16) (Alkalihalobacillus clausii).